The chain runs to 78 residues: Small ribosomal subunit protein uS17 (78 aa).

This sequence belongs to the universal ribosomal protein uS17 family. In terms of assembly, part of the 30S ribosomal subunit.

Its function is as follows. One of the primary rRNA binding proteins, it binds specifically to the 5'-end of 16S ribosomal RNA. This is Small ribosomal subunit protein uS17 from Wolbachia pipientis wMel.